A 233-amino-acid polypeptide reads, in one-letter code: LexA repressor (233 aa).

The H-T-H motif DNA-binding region spans 26 to 46 (FDEMKDALDLRSKSGIHRLIT). Active-site for autocatalytic cleavage activity residues include S154 and K192.

It belongs to the peptidase S24 family. In terms of assembly, homodimer.

It carries out the reaction Hydrolysis of Ala-|-Gly bond in repressor LexA.. Represses a number of genes involved in the response to DNA damage (SOS response), including recA and lexA. In the presence of single-stranded DNA, RecA interacts with LexA causing an autocatalytic cleavage which disrupts the DNA-binding part of LexA, leading to derepression of the SOS regulon and eventually DNA repair. The protein is LexA repressor of Nitrobacter hamburgensis (strain DSM 10229 / NCIMB 13809 / X14).